Reading from the N-terminus, the 150-residue chain is UPF0506 protein SJCHGC02381 (150 aa).

A signal peptide spans 1 to 18 (MNTCIQLLILCLVTVINS). Asn20, Asn24, Asn32, Asn36, Asn48, Asn52, Asn64, and Asn110 each carry an N-linked (GlcNAc...) asparagine glycan. A disordered region spans residues 22-49 (TDNSTENTIKNETENATETELPETFENE). Over residues 36–49 (NATETELPETFENE) the composition is skewed to acidic residues. Intrachain disulfides connect Cys116-Cys130, Cys123-Cys134, and Cys129-Cys139.

It belongs to the UPF0506 family.

The protein localises to the secreted. This Schistosoma japonicum (Blood fluke) protein is UPF0506 protein SJCHGC02381.